The primary structure comprises 118 residues: Neutral phospholipase A2 homolog taipoxin beta chain 2 (118 aa).

Disulfide bonds link Cys-11–Cys-71, Cys-27–Cys-117, Cys-29–Cys-45, Cys-44–Cys-98, Cys-51–Cys-91, Cys-60–Cys-84, and Cys-78–Cys-89.

It belongs to the phospholipase A2 family. Group I subfamily. D49 sub-subfamily. In terms of assembly, heterotrimer of alpha, beta, and gamma chains; non-covalently linked. Expressed by the venom gland.

It is found in the secreted. Heterotrimer: Snake venom phospholipase A2 (PLA2) heterotrimer that acts as a potent presynaptic neurotoxin by blocking synaptic transmission and synaptic vesicle recycling. May act by binding in a calcium-dependent fashion to neurotonal pentraxin-1 (NPTX1) and neurotonal pentraxin-2 (NPTX2), but not to neuronal pentraxin receptor (NPTXR). Also binds to taipoxin-associated calcium binding protein 49 (RCN2), a protein localized in the lumen of endoplasmic reticulum. In terms of biological role, monomer (beta chain): Snake venom phospholipase A2 homolog that is neither toxic nor enzymatically active. Does not bind calcium. The protein is Neutral phospholipase A2 homolog taipoxin beta chain 2 of Oxyuranus scutellatus scutellatus (Australian taipan).